Reading from the N-terminus, the 261-residue chain is Thiamine thiazole synthase (261 aa).

NAD(+) is bound by residues alanine 33, 52–53, glycine 60, valine 124, and 152–154; these read ER and HVD. Positions 154 and 169 each coordinate Fe cation. Position 219 (isoleucine 219) interacts with NAD(+). Position 229 (arginine 229) interacts with glycine.

Belongs to the THI4 family. Homooctamer; tetramer of dimers. Fe(2+) serves as cofactor.

The enzyme catalyses hydrogen sulfide + glycine + NAD(+) = ADP-5-ethyl-4-methylthiazole-2-carboxylate + nicotinamide + 3 H2O + H(+). It functions in the pathway cofactor biosynthesis; thiamine diphosphate biosynthesis. Involved in the biosynthesis of the thiazole moiety of thiamine. Catalyzes the conversion of NAD and glycine to adenosine diphosphate 5-(2-hydroxyethyl)-4-methylthiazole-2-carboxylate (ADT), an adenylated thiazole intermediate, using free sulfide as a source of sulfur. This is Thiamine thiazole synthase from Pyrobaculum aerophilum (strain ATCC 51768 / DSM 7523 / JCM 9630 / CIP 104966 / NBRC 100827 / IM2).